Consider the following 391-residue polypeptide: Winged helix repair factor 1 (391 aa).

Composition is skewed to low complexity over residues 1-24 (MNIK…PSPI) and 49-63 (LSFN…SNIN). Residues 1–95 (MNIKRNQNNS…SITTTTATST (95 aa)) form a disordered region. Residues 64–74 (GEEDNDDDDRE) show a composition bias toward acidic residues. Over residues 82–95 (NPNPSITTTTATST) the composition is skewed to low complexity.

The protein belongs to the STK19 family.

It is found in the nucleus. Functionally, DNA-binding protein which is required for efficient transcription-coupled nucleotide excision repair. In Dictyostelium discoideum (Social amoeba), this protein is Winged helix repair factor 1.